A 509-amino-acid chain; its full sequence is uncharacterized protein (509 aa).

Disordered regions lie at residues 112–131 (KSKQ…SENE), 152–325 (NKNT…NNDS), 365–457 (NNIN…PNQG), and 488–509 (AQQP…VQQQ). Composition is skewed to low complexity over residues 116–127 (NNNGFNGHKGNF) and 153–184 (KNTI…SNTT). Acidic residues predominate over residues 189-217 (YSDDDYQNEQNEFEEEDYDSNDDENDSHD). Residues 228 to 242 (KTTNQLKRKVSSSFT) are compositionally biased toward polar residues. Low complexity-rich tracts occupy residues 243–325 (NNNY…NNDS) and 365–397 (NNIN…TNND). The segment covering 398–422 (LKSSNHSNYDFNYNTNERLSHSPIQ) has biased composition (polar residues). The segment covering 423 to 442 (THSSSNNSTPSNQSPTFPSN) has biased composition (low complexity). 2 stretches are compositionally biased toward polar residues: residues 443–457 (YISQ…PNQG) and 496–509 (NNNV…VQQQ).

This is an uncharacterized protein from Dictyostelium discoideum (Social amoeba).